A 266-amino-acid chain; its full sequence is Trypsin Blo t 3 (266 aa).

Residues 1 to 15 (MKVLVLFCLVSLAAA) form the signal peptide. Positions 16–35 (GPLKDALNKAQVDAFYAEGY) are excised as a propeptide. The Peptidase S1 domain occupies 36–260 (IVDGSNAADG…RVGNYISWIK (225 aa)). Residues cysteine 60 and cysteine 76 are joined by a disulfide bond. Catalysis depends on charge relay system residues histidine 75 and aspartate 120. 2 disulfides stabilise this stretch: cysteine 187–cysteine 204 and cysteine 216–cysteine 240. The active-site Charge relay system is the serine 220.

It belongs to the peptidase S1 family.

It localises to the secreted. The enzyme catalyses Preferential cleavage: Arg-|-Xaa, Lys-|-Xaa.. In Blomia tropicalis (Mite), this protein is Trypsin Blo t 3.